A 212-amino-acid polypeptide reads, in one-letter code: External core antigen (212 aa).

The first 19 residues, 1–19 (MQLFHLCLIIFCSCPTVQA), serve as a signal peptide directing secretion. Residues 25 to 27 (GWL) form an HBEAG region. The interval 165-212 (NAPILSTLPETTVVRRRGRSPRRRTPSPRRRRSQSPRRRRSQSPASQC) is disordered. Positions 178–205 (VRRRGRSPRRRTPSPRRRRSQSPRRRRS) are enriched in basic residues. 3 tandem repeats follow at residues 184–190 (SPRRRTP), 191–198 (SPRRRRSQ), and 199–206 (SPRRRRSQ). A 3 X 8 AA repeats of S-P-R-R-R-R-S-Q region spans residues 184–206 (SPRRRTPSPRRRRSQSPRRRRSQ). A propeptide spanning residues 184–212 (SPRRRTPSPRRRRSQSPRRRRSQSPASQC) is cleaved from the precursor.

This sequence belongs to the orthohepadnavirus precore antigen family. In terms of assembly, homodimerizes. In terms of processing, phosphorylated. Cleaved by host furin.

The protein localises to the secreted. It localises to the host nucleus. In terms of biological role, may regulate immune response to the intracellular capsid in acting as a T-cell tolerogen, by having an immunoregulatory effect which prevents destruction of infected cells by cytotoxic T-cells. This immune regulation may predispose to chronicity during perinatal infections and prevent severe liver injury during adult infections. In Hepatitis B virus genotype F2 (isolate Brazil/w4B) (HBV-F), this protein is External core antigen.